Here is a 225-residue protein sequence, read N- to C-terminus: PKHD-type hydroxylase YbiX (225 aa).

One can recognise a Fe2OG dioxygenase domain in the interval 78–177 (TLSTPLFNRY…RVASFMWIQS (100 aa)). Residues H96, D98, and H158 each coordinate Fe cation. Position 168 (R168) interacts with 2-oxoglutarate.

It depends on Fe(2+) as a cofactor. L-ascorbate is required as a cofactor.

In Escherichia coli (strain K12 / DH10B), this protein is PKHD-type hydroxylase YbiX.